The chain runs to 1197 residues: DNA-directed RNA polymerase subunit beta (1197 aa).

Over residues 1172-1185 (KEQEEKKAQQEAEK) the composition is skewed to basic and acidic residues. The tract at residues 1172 to 1197 (KEQEEKKAQQEAEKAQAASAEDPSAE) is disordered. Residues 1186–1197 (AQAASAEDPSAE) show a composition bias toward low complexity.

Belongs to the RNA polymerase beta chain family. As to quaternary structure, the RNAP catalytic core consists of 2 alpha, 1 beta, 1 beta' and 1 omega subunit. When a sigma factor is associated with the core the holoenzyme is formed, which can initiate transcription.

It carries out the reaction RNA(n) + a ribonucleoside 5'-triphosphate = RNA(n+1) + diphosphate. DNA-dependent RNA polymerase catalyzes the transcription of DNA into RNA using the four ribonucleoside triphosphates as substrates. This Latilactobacillus sakei subsp. sakei (strain 23K) (Lactobacillus sakei subsp. sakei) protein is DNA-directed RNA polymerase subunit beta.